Consider the following 333-residue polypeptide: L-lactate dehydrogenase A chain (333 aa).

NAD(+) is bound by residues 30–58 and Arg-100; that span reads GMVGMAAAVSILLKDLTDELALVDVMEDK. 3 residues coordinate substrate: Arg-107, Asn-139, and Arg-170. Asn-139 lines the NAD(+) pocket. Catalysis depends on His-194, which acts as the Proton acceptor. Thr-249 lines the substrate pocket.

The protein belongs to the LDH/MDH superfamily. LDH family. Homotetramer.

It localises to the cytoplasm. The enzyme catalyses (S)-lactate + NAD(+) = pyruvate + NADH + H(+). The protein operates within fermentation; pyruvate fermentation to lactate; (S)-lactate from pyruvate: step 1/1. Its function is as follows. Interconverts simultaneously and stereospecifically pyruvate and lactate with concomitant interconversion of NADH and NAD(+). The polypeptide is L-lactate dehydrogenase A chain (ldha) (Danio rerio (Zebrafish)).